Here is a 451-residue protein sequence, read N- to C-terminus: Mannan endo-1,6-alpha-mannosidase DFG5 (451 aa).

The N-terminal stretch at 1–21 is a signal peptide; the sequence is MVSLQQLTISILLLFTASVQS. Residues N86, N111, N135, N203, N243, N268, and N402 are each glycosylated (N-linked (GlcNAc...) asparagine). A429 carries the GPI-anchor amidated alanine lipid modification. A propeptide spans 430 to 451 (removed in mature form); it reads GAGVLTAIVLAVILGGAIWMIF.

It belongs to the glycosyl hydrolase 76 family. The GPI-anchor is attached to the protein in the endoplasmic reticulum and serves to target the protein to the cell surface. There, the glucosamine-inositol phospholipid moiety is cleaved off and the GPI-modified mannoprotein is covalently attached via its lipidless GPI glycan remnant to the 1,6-beta-glucan of the outer cell wall layer. Post-translationally, N-mannosylated.

Its subcellular location is the secreted. The protein localises to the cell wall. The protein resides in the cell membrane. It catalyses the reaction Random hydrolysis of (1-&gt;6)-alpha-D-mannosidic linkages in unbranched (1-&gt;6)-mannans.. Its function is as follows. Required for normal synthesis of the cell wall and alkaline pH-induced hypha formation. In Candida albicans (strain SC5314 / ATCC MYA-2876) (Yeast), this protein is Mannan endo-1,6-alpha-mannosidase DFG5 (DFG5).